The chain runs to 191 residues: uncharacterized protein (191 aa).

The 61-residue stretch at 5-65 folds into the HTH tetR-type domain; that stretch reads GDSREKILHT…IEAVTYTGKI (61 aa). The H-T-H motif DNA-binding region spans 28-47; the sequence is GLNQIVKESGAPKGSLYHFF.

This is an uncharacterized protein from Bacillus subtilis (strain 168).